The sequence spans 636 residues: DNA-directed RNA polymerase subunit beta' (636 aa).

Zn(2+) contacts are provided by Cys-70, Cys-72, Cys-85, and Cys-88. Residues Asp-471, Asp-473, and Asp-475 each coordinate Mg(2+).

It belongs to the RNA polymerase beta' chain family. RpoC1 subfamily. Mg(2+) is required as a cofactor. The cofactor is Zn(2+).

The protein resides in the plastid. It localises to the cyanelle. The catalysed reaction is RNA(n) + a ribonucleoside 5'-triphosphate = RNA(n+1) + diphosphate. DNA-dependent RNA polymerase catalyzes the transcription of DNA into RNA using the four ribonucleoside triphosphates as substrates. This chain is DNA-directed RNA polymerase subunit beta', found in Cyanophora paradoxa.